The sequence spans 551 residues: Putative transport protein CGSHiGG_02670 (551 aa).

5 helical membrane-spanning segments follow: residues 4 to 24 (IAIT…IGHW), 28 to 48 (GVGL…HFTN), 65 to 85 (FGLI…FFSS), 95 to 115 (AFAI…HKIA), and 157 to 177 (VSYA…MWLI). RCK C-terminal domains lie at 191-275 (RFNA…IIGH) and 277-360 (VDAP…VIGN). The next 6 helical transmembrane spans lie at 370-390 (MLPV…PFYI), 402-424 (AGGP…LYWF), 438-458 (IVLF…DTLV), 463-483 (LEWM…VGTI), 492-512 (YLTI…LAFA), and 529-549 (VYPL…VLLW).

Belongs to the AAE transporter (TC 2.A.81) family. YidE subfamily.

The protein localises to the cell membrane. This chain is Putative transport protein CGSHiGG_02670, found in Haemophilus influenzae (strain PittGG).